Consider the following 552-residue polypeptide: uncharacterized protein (552 aa).

A DhaL domain is found at 8-200; it reads KLFADMIIQG…LLCVYEGFLK (193 aa).

This is an uncharacterized protein from Staphylococcus haemolyticus (strain JCSC1435).